Here is a 306-residue protein sequence, read N- to C-terminus: D-alanine--D-alanine ligase (306 aa).

One can recognise an ATP-grasp domain in the interval 102–300; that stretch reads KHVAKAAGIP…FGEFLRWMVE (199 aa). 128–183 lines the ATP pocket; sequence PMKPPYVVKPVREGSSFGVVIVKEDQSHPPQVITSSEWRYGDRVMVERYIAGRELT. Mg(2+) contacts are provided by aspartate 252, glutamate 267, and asparagine 269.

The protein belongs to the D-alanine--D-alanine ligase family. Mg(2+) serves as cofactor. It depends on Mn(2+) as a cofactor.

It is found in the cytoplasm. The catalysed reaction is 2 D-alanine + ATP = D-alanyl-D-alanine + ADP + phosphate + H(+). It participates in cell wall biogenesis; peptidoglycan biosynthesis. Its function is as follows. Cell wall formation. The polypeptide is D-alanine--D-alanine ligase (Sinorhizobium fredii (strain NBRC 101917 / NGR234)).